The primary structure comprises 961 residues: MAAGGKSFLADAGYGEQELDANSALMELDKGLRSGKLGEQCEAVVRFPRLFQKYPFPILINSAFLKLADVFRVGNNFLRLCVLKVTQQSEKHLEKILNVDEFVKRVFSVIHSNDPVARAITLRMLGSMASIIPERKNAHHSIRQSLDSHDNVEVEAAIFAAANFSAQSKDFAAGICNKISEMIQGLATPVDLKLKLIPILQHMHHDASLASSSRQLLQQLVTSYPSTKMVIVTLHTFTLLAASSLVDIPKQVQLLLQYLKNDPRKAVKRLAIQDLKLLANKIPHTWSRENIQALCESALHTPYDSLKLGMLSVLSTLSGTIAIKQYFSSAPGTAATTARSFDLVKLAQECCYHNNRGIAAHGVRILTNISASCQEKDLLPLEQDAVFGLESLLVLCSQDDSPGAQATLKITLTCMVKLVKCRPHLSQSVVESLLTQLHSAQDAARILMCHCLAAIAMQLPVLADGMLGDLMELYKVIGRSTTDKKQELLVSLATVIFVSSQKALSPEIKTVIKQQLENASNGWTAYRIARQASRMGNHDMARELYQSLLTQVASEHFYFWLNSLKEFSHAEQCLTGLQEDNYSSALSCIAEALKSYHKGIASLTAASTPLNPLSFQCGFVKLRIDLLQAFSQLICTCNSLKTSPPPAIATTIAMTSGNDLQRCGRISNQMKLSMEEFRNLAVRYGDLYQSSFDADSATLRNVELQQQSCLLISHAIEALILDPESANFQEYSSNGAAHVESEYERRMMSVFNHVLEEVESLNRKYAPVSYLHTACLCSAVIALLKVPLSFQRYFFQKLQSTSIKLALSPSPRNPAEPIAVQNNQQLALKVEGVVQHGSKPGLFRKIQSVCLNVSSVLQSKSGQDYKIPIDNMTNEMEQRVEPHNDYFSTQFLLNFVILDTHNITVESSVIDSNGIVWKTGPKTTIFVKSLEDPYSQQVRLQQQQGQPPSQQQQQRTAYSRF.

Positions 937–955 (QVRLQQQQGQPPSQQQQQR) are enriched in low complexity. The disordered stretch occupies residues 937–961 (QVRLQQQQGQPPSQQQQQRTAYSRF).

Belongs to the Integrator subunit 7 family. Component of the Integrator complex, composed of core subunits INTS1, INTS2, INTS3, INTS4, INTS5, INTS6, INTS7, INTS8, INTS9/RC74, INTS10, INTS11/CPSF3L, INTS12, INTS13, INTS14 and INTS15. The core complex associates with protein phosphatase 2A subunits PPP2CA and PPP2R1A, to form the Integrator-PP2A (INTAC) complex.

The protein resides in the nucleus. Its subcellular location is the chromosome. The protein localises to the cytoplasm. Functionally, component of the integrator complex, a multiprotein complex that terminates RNA polymerase II (Pol II) transcription in the promoter-proximal region of genes. The integrator complex provides a quality checkpoint during transcription elongation by driving premature transcription termination of transcripts that are unfavorably configured for transcriptional elongation: the complex terminates transcription by (1) catalyzing dephosphorylation of the C-terminal domain (CTD) of Pol II subunit POLR2A/RPB1 and SUPT5H/SPT5, (2) degrading the exiting nascent RNA transcript via endonuclease activity and (3) promoting the release of Pol II from bound DNA. The integrator complex is also involved in terminating the synthesis of non-coding Pol II transcripts, such as enhancer RNAs (eRNAs), small nuclear RNAs (snRNAs), telomerase RNAs and long non-coding RNAs (lncRNAs). This Gallus gallus (Chicken) protein is Integrator complex subunit 7 (INTS7).